Consider the following 65-residue polypeptide: Alpha-toxin Bot1 (65 aa).

Positions 2–64 constitute an LCN-type CS-alpha/beta domain; that stretch reads RDAYIAQPEN…VPIRIPGKCH (63 aa). Intrachain disulfides connect cysteine 12–cysteine 63, cysteine 16–cysteine 36, cysteine 22–cysteine 46, and cysteine 26–cysteine 48. Phenylalanine 65 carries the post-translational modification Phenylalanine amide.

Belongs to the long (4 C-C) scorpion toxin superfamily. Sodium channel inhibitor family. Alpha subfamily. As to expression, expressed by the venom gland.

Its subcellular location is the secreted. In terms of biological role, alpha toxins bind voltage-independently at site-3 of sodium channels (Nav) and inhibit the inactivation of the activated channels, thereby blocking neuronal transmission. The protein is Alpha-toxin Bot1 of Buthus occitanus tunetanus (Common European scorpion).